The chain runs to 93 residues: Guanine nucleotide-binding protein subunit gamma 1 (93 aa).

Residues 12–52 (TRGRHRIQAELKKLEQEARFLEEELEELDKTDKVSAALQEL) adopt a coiled-coil conformation. In terms of domain architecture, G protein gamma spans 20–93 (AELKKLEQEA…DLRRCKCWFL (74 aa)). The S-palmitoyl cysteine moiety is linked to residue cysteine 88. The residue at position 90 (cysteine 90) is a Cysteine methyl ester. Residue cysteine 90 is the site of S-farnesyl cysteine attachment. A propeptide spans 91–93 (WFL) (removed in mature form).

In terms of assembly, g proteins are composed of 3 units, alpha, beta and gamma. Interacts with the beta subunit RGB1.

It is found in the cell membrane. Guanine nucleotide-binding proteins (G proteins) are involved as modulators or transducers in various transmembrane signaling systems. The chain is Guanine nucleotide-binding protein subunit gamma 1 from Oryza sativa subsp. indica (Rice).